Reading from the N-terminus, the 135-residue chain is ARGOS-like protein (135 aa).

Positions 71–122 (FSLESMVVLVGLTASLLILPLILPPLPPPPFMLLLIPIGIMVLLMVLAFMPS) are organ Size Related (OSR) domain. Transmembrane regions (helical) follow at residues 76-96 (MVVLVGLTASLLILPLILPPL) and 100-120 (PFMLLLIPIGIMVLLMVLAFM).

Belongs to the plant organ size related (OSR) protein family. As to expression, expressed in cotyledons, roots, flowers, siliques and leaves.

It is found in the membrane. It localises to the nucleus. Its subcellular location is the cytoplasm. The protein resides in the endoplasmic reticulum. In terms of biological role, promotes cell expansion-dependent organ growth, probably via a brassinosteroids signaling pathway. Acts downstream of BRI1. The polypeptide is ARGOS-like protein (ARL) (Arabidopsis thaliana (Mouse-ear cress)).